Consider the following 486-residue polypeptide: UDP-N-acetylmuramate--L-alanine ligase (486 aa).

123-129 (GTHGKTT) provides a ligand contact to ATP.

This sequence belongs to the MurCDEF family.

The protein resides in the cytoplasm. The catalysed reaction is UDP-N-acetyl-alpha-D-muramate + L-alanine + ATP = UDP-N-acetyl-alpha-D-muramoyl-L-alanine + ADP + phosphate + H(+). It functions in the pathway cell wall biogenesis; peptidoglycan biosynthesis. Cell wall formation. The sequence is that of UDP-N-acetylmuramate--L-alanine ligase from Pseudomonas syringae pv. syringae (strain B728a).